We begin with the raw amino-acid sequence, 144 residues long: Large ribosomal subunit protein uL15 (144 aa).

The interval 1–57 (MELNNLKPAEGSKHAKRRVGRGIGSGLGKTAGRGHKGQKSRSGGFHKVGFEGGQMPL) is disordered. Residues 21–31 (RGIGSGLGKTA) show a composition bias toward gly residues.

The protein belongs to the universal ribosomal protein uL15 family. Part of the 50S ribosomal subunit.

In terms of biological role, binds to the 23S rRNA. This is Large ribosomal subunit protein uL15 from Paraburkholderia phytofirmans (strain DSM 17436 / LMG 22146 / PsJN) (Burkholderia phytofirmans).